Here is a 314-residue protein sequence, read N- to C-terminus: 3'-5' exoribonuclease YhaM (314 aa).

An HD domain is found at 163–279 (HVVSMLHLAK…LHYIDNLDAK (117 aa)).

It belongs to the YhaM family.

In terms of biological role, shows a 3'-5' exoribonuclease activity. This Bacillus pumilus (strain SAFR-032) protein is 3'-5' exoribonuclease YhaM.